Here is a 156-residue protein sequence, read N- to C-terminus: SsrA-binding protein (156 aa).

Positions Lys-130–Tyr-156 are disordered. The segment covering Asp-132–Tyr-156 has biased composition (basic and acidic residues).

The protein belongs to the SmpB family.

Its subcellular location is the cytoplasm. Its function is as follows. Required for rescue of stalled ribosomes mediated by trans-translation. Binds to transfer-messenger RNA (tmRNA), required for stable association of tmRNA with ribosomes. tmRNA and SmpB together mimic tRNA shape, replacing the anticodon stem-loop with SmpB. tmRNA is encoded by the ssrA gene; the 2 termini fold to resemble tRNA(Ala) and it encodes a 'tag peptide', a short internal open reading frame. During trans-translation Ala-aminoacylated tmRNA acts like a tRNA, entering the A-site of stalled ribosomes, displacing the stalled mRNA. The ribosome then switches to translate the ORF on the tmRNA; the nascent peptide is terminated with the 'tag peptide' encoded by the tmRNA and targeted for degradation. The ribosome is freed to recommence translation, which seems to be the essential function of trans-translation. The polypeptide is SsrA-binding protein (Exiguobacterium sibiricum (strain DSM 17290 / CCUG 55495 / CIP 109462 / JCM 13490 / 255-15)).